A 329-amino-acid polypeptide reads, in one-letter code: RING finger protein 225 (329 aa).

The disordered stretch occupies residues 1–55 (MPCPRPFWLRHSRAPQGSGPSSPGSLSAPRSPSRGEDQEEEEEEEGDGSPGSGPI). Low complexity predominate over residues 14-32 (APQGSGPSSPGSLSAPRSP). Positions 37-47 (DQEEEEEEEGD) are enriched in acidic residues. The RING-type zinc finger occupies 64–112 (CLICVSSFDGVFKLPKRLDCGHVFCLECLARLSLATAGGGNAVACPVCR). Residues 122 to 181 (GLPALPTQSGLLPRDARAPPSRQGSVRFDRRRGLLYLRPPPPPPGPRKARAPPPPPPLRL) form a disordered region. Over residues 159–179 (RPPPPPPGPRKARAPPPPPPL) the composition is skewed to pro residues. Residues 203 to 223 (ALAVLVAAGLVVSGVYIFFLI) form a helical membrane-spanning segment. Residues 248 to 329 (FPPRPPPGSP…RGARRLWGSQ (82 aa)) form a disordered region. Over residues 281–293 (DALEPEAGPEDPA) the composition is skewed to acidic residues. Positions 294–304 (EAERTLDRRSD) are enriched in basic and acidic residues.

It is found in the membrane. This Homo sapiens (Human) protein is RING finger protein 225.